We begin with the raw amino-acid sequence, 904 residues long: Anoctamin-5 (904 aa).

At 1–290 the chain is on the cytoplasmic side; it reads MVEQEGLTAK…HLIRNYFGEK (290 aa). Residues 291–311 traverse the membrane as a helical segment; it reads IGIYFVFLGYYTEMLLFAALV. The Extracellular portion of the chain corresponds to 312-371; that stretch reads GLACFIYGLLSMENNRTSTEICDPDIGGQMIMCPLCDEVCDYWRLNTTCLHSKFSHLFDN. N-linked (GlcNAc...) asparagine glycosylation is found at asparagine 326, asparagine 357, and asparagine 371. Residues 372–392 form a helical membrane-spanning segment; it reads ESTVFFALFMGIWVTLFLEFW. The Cytoplasmic portion of the chain corresponds to 393–453; that stretch reads KQRQARLEYE…CHRIPWYFVS (61 aa). A helical transmembrane segment spans residues 454 to 474; the sequence is GTTVTFGMALLLSSMVSILIY. The Extracellular segment spans residues 475-502; it reads RLSVFATFASFMESEATLQSVKSFFTPQ. Residues 503 to 523 traverse the membrane as a helical segment; it reads LATALSGSCLNCIVILILNFF. At 524 to 548 the chain is on the cytoplasmic side; sequence YEKISAWITKMEIPRTHQEYESSLT. A helical membrane pass occupies residues 549 to 569; that stretch reads LKMFLFQFVNYYSSCFYVAFF. Residues 570–667 lie on the Extracellular side of the membrane; the sequence is KGKFVGYPGS…RGLFYEYLET (98 aa). Residues 668–688 traverse the membrane as a helical segment; sequence VIQFGFATLFVASFPLAPLFA. Over 689–723 the chain is Cytoplasmic; the sequence is LMNNIMGIRVDAWKLTTQYRRPVAAKAHSIGVWQD. The helical transmembrane segment at 724–744 threads the bilayer; it reads ILFGMAIVSVATNAFIVSFTS. Residues 745 to 825 lie on the Extracellular side of the membrane; the sequence is DIIPRLVYFY…FWHVLAAKMT (81 aa). N-linked (GlcNAc...) asparagine glycans are attached at residues asparagine 759, asparagine 769, and asparagine 782. The helical transmembrane segment at 826–846 threads the bilayer; sequence FIIVMEHVVFLFKFLLAWLIP. Residues 847-904 are Cytoplasmic-facing; sequence DVPKDVVEKIKREKLMTIKIIHDFELNKLKENLDVEYGNIMKNVLVDEDNSLKAKTTV.

Belongs to the anoctamin family. As to expression, highly expressed in skeletal muscle, bone tissues and thyroid gland.

It localises to the endoplasmic reticulum membrane. It is found in the cell membrane. Plays a role in plasma membrane repair in a process involving annexins. Does not exhibit calcium-activated chloride channel (CaCC) activity. The polypeptide is Anoctamin-5 (Ano5) (Mus musculus (Mouse)).